Reading from the N-terminus, the 53-residue chain is Rho GTPase-activating protein 6 (53 aa).

The protein resides in the cytoplasm. GTPase activator for the Rho-type GTPases by converting them to an inactive GDP-bound state. Could regulate the interactions of signaling molecules with the actin cytoskeleton. Promotes continuous elongation of cytoplasmic processes during cell motility and simultaneous retraction of the cell body changing the cell morphology. The protein is Rho GTPase-activating protein 6 (arhgap6) of Takifugu rubripes (Japanese pufferfish).